We begin with the raw amino-acid sequence, 650 residues long: XK-related protein 4 (650 aa).

A compositionally biased stretch (basic and acidic residues) spans 1-15; sequence MAAKSDGRLKMKKSS. The disordered stretch occupies residues 1-44; that stretch reads MAAKSDGRLKMKKSSDVAFTPLQNSDHSGSVQGLAPGLPSGSGA. A compositionally biased stretch (polar residues) spans 21–31; it reads PLQNSDHSGSV. 2 consecutive transmembrane segments (helical) span residues 114 to 134 and 144 to 164; these read WILAAVAVYFADVGTDVWLAV and WFGLTLFFVVLGSLSVQVFSF. A Phosphoserine modification is found at Ser-200. A disordered region spans residues 200-238; it reads SAAGEGEARPSTPQRQASNASKSNIAAANSGSNSSGATR. Residues 216–238 are compositionally biased toward low complexity; sequence ASNASKSNIAAANSGSNSSGATR. The next 8 helical transmembrane spans lie at 248–268, 306–326, 331–351, 365–385, 396–418, 428–448, 457–477, and 487–507; these read CSFCIWLLQSLIHILQLGQIW, HLLATFLESAPQLVLQLCIIV, LQALQGFTAAASLVSLAWALA, KPISYMAVIIQFCWHFFTIAA, VFQLYFGIFIVLHWCIMTFWIVH, WEEIVFDMVVGIIYIFSWFNV, LFIYYFVILLENTALSALWYL, and FAIPALCVVFSSFLTGVVFML.

Belongs to the XK family. In terms of assembly, homodimer; homodimerization takes place upon caspase cleavage. Interacts with the processed C-terminus of XRCC4 (protein XRCC4, C-terminus); interaction promotes the phospholipid scramblase activity. Undergoes proteolytic processing by caspase-3 (CASP3), caspase-6 (CASP6) and caspase-7 (CASP7) to generate the XK-related protein 4, processed form, leading to its activation.

It is found in the cell membrane. The catalysed reaction is a 1,2-diacyl-sn-glycero-3-phospho-L-serine(in) = a 1,2-diacyl-sn-glycero-3-phospho-L-serine(out). Phospholipid scramblase activity is activated upon caspase cleavage to generate the XK-related protein 4, processed form. Does not act prior the onset of apoptosis. Its activity is regulated as follows. Homodimerizes upon caspase cleavage. Phospholipid scramblase activity is activated following interaction with the processed C-terminus of XRCC4 (protein XRCC4, C-terminus). Phospholipid scramblase that promotes phosphatidylserine exposure on apoptotic cell surface. Phosphatidylserine is a specific marker only present at the surface of apoptotic cells and acts as a specific signal for engulfment. The sequence is that of XK-related protein 4 from Homo sapiens (Human).